We begin with the raw amino-acid sequence, 484 residues long: L-amino-acid oxidase (484 aa).

Cys8 and Cys171 form a disulfide bridge. FAD is bound by residues 41 to 42, 61 to 62, and Arg69; these read MS and EA. Residue His73 participates in Zn(2+) binding. Position 85 to 88 (85 to 88) interacts with FAD; it reads GPMR. Arg88 serves as a coordination point for substrate. N-linked (GlcNAc...) asparagine glycosylation is present at Asn170. His221 provides a ligand contact to substrate. FAD is bound at residue Val259. Residue Glu277 coordinates Zn(2+). A disulfide bridge connects residues Cys329 and Cys410. Tyr370 provides a ligand contact to substrate. FAD contacts are provided by residues Glu455 and 462 to 467; that span reads GWIDST. A substrate-binding site is contributed by 462–463; that stretch reads GW.

The protein belongs to the flavin monoamine oxidase family. FIG1 subfamily. As to quaternary structure, homodimer; non-covalently linked. The cofactor is FAD. Expressed by the venom gland.

The protein localises to the secreted. The catalysed reaction is an L-alpha-amino acid + O2 + H2O = a 2-oxocarboxylate + H2O2 + NH4(+). Its function is as follows. Catalyzes an oxidative deamination of predominantly hydrophobic and aromatic L-amino acids, thus producing hydrogen peroxide that may contribute to the diverse toxic effects of this enzyme. Exhibits diverse biological activities, such as hemorrhage, hemolysis, edema, apoptosis of vascular endothelial cells or tumor cell lines, antibacterial and antiparasitic activities, as well as regulation of platelet aggregation. Effects of snake L-amino oxidases on platelets are controversial, since they either induce aggregation or inhibit agonist-induced aggregation. These different effects are probably due to different experimental conditions. This Vipera ammodytes ammodytes (Western sand viper) protein is L-amino-acid oxidase.